Consider the following 943-residue polypeptide: Isoleucine--tRNA ligase (943 aa).

The 'HIGH' region motif lies at 58–68 (PYANGNIHIGH). Residue Glu-567 participates in L-isoleucyl-5'-AMP binding. A 'KMSKS' region motif is present at residues 608-612 (KMSKS). An ATP-binding site is contributed by Lys-611. The Zn(2+) site is built by Cys-906, Cys-909, Cys-926, and Cys-929.

It belongs to the class-I aminoacyl-tRNA synthetase family. IleS type 1 subfamily. In terms of assembly, monomer. It depends on Zn(2+) as a cofactor.

It is found in the cytoplasm. It catalyses the reaction tRNA(Ile) + L-isoleucine + ATP = L-isoleucyl-tRNA(Ile) + AMP + diphosphate. In terms of biological role, catalyzes the attachment of isoleucine to tRNA(Ile). As IleRS can inadvertently accommodate and process structurally similar amino acids such as valine, to avoid such errors it has two additional distinct tRNA(Ile)-dependent editing activities. One activity is designated as 'pretransfer' editing and involves the hydrolysis of activated Val-AMP. The other activity is designated 'posttransfer' editing and involves deacylation of mischarged Val-tRNA(Ile). This Pseudomonas savastanoi pv. phaseolicola (strain 1448A / Race 6) (Pseudomonas syringae pv. phaseolicola (strain 1448A / Race 6)) protein is Isoleucine--tRNA ligase.